The primary structure comprises 322 residues: Ferredoxin--NADP reductase (322 aa).

FAD contacts are provided by Asp34, Gln42, Tyr47, Val87, Phe120, Asp279, and Thr320.

Belongs to the ferredoxin--NADP reductase type 2 family. As to quaternary structure, homodimer. FAD serves as cofactor.

It catalyses the reaction 2 reduced [2Fe-2S]-[ferredoxin] + NADP(+) + H(+) = 2 oxidized [2Fe-2S]-[ferredoxin] + NADPH. This chain is Ferredoxin--NADP reductase, found in Streptococcus pneumoniae serotype 19F (strain G54).